A 161-amino-acid chain; its full sequence is 2-C-methyl-D-erythritol 2,4-cyclodiphosphate synthase (161 aa).

Residues aspartate 10 and histidine 12 each coordinate a divalent metal cation. 4-CDP-2-C-methyl-D-erythritol 2-phosphate is bound by residues 10–12 and 36–37; these read DVH and HS. Histidine 44 contributes to the a divalent metal cation binding site. 4-CDP-2-C-methyl-D-erythritol 2-phosphate contacts are provided by residues 58-60, 63-67, 102-108, 134-137, phenylalanine 141, and arginine 144; these read DIG, FPDTD, AQVPKMA, and TTTE.

The protein belongs to the IspF family. Homotrimer. Requires a divalent metal cation as cofactor.

The enzyme catalyses 4-CDP-2-C-methyl-D-erythritol 2-phosphate = 2-C-methyl-D-erythritol 2,4-cyclic diphosphate + CMP. Its pathway is isoprenoid biosynthesis; isopentenyl diphosphate biosynthesis via DXP pathway; isopentenyl diphosphate from 1-deoxy-D-xylulose 5-phosphate: step 4/6. In terms of biological role, involved in the biosynthesis of isopentenyl diphosphate (IPP) and dimethylallyl diphosphate (DMAPP), two major building blocks of isoprenoid compounds. Catalyzes the conversion of 4-diphosphocytidyl-2-C-methyl-D-erythritol 2-phosphate (CDP-ME2P) to 2-C-methyl-D-erythritol 2,4-cyclodiphosphate (ME-CPP) with a corresponding release of cytidine 5-monophosphate (CMP). In Shewanella baltica (strain OS223), this protein is 2-C-methyl-D-erythritol 2,4-cyclodiphosphate synthase.